We begin with the raw amino-acid sequence, 29 residues long: Glucagon (29 aa).

The protein belongs to the glucagon family.

It localises to the secreted. Promotes hydrolysis of glycogen and lipids, and raises the blood sugar level. The sequence is that of Glucagon (gcg) from Thunnus obesus (Bigeye tuna).